We begin with the raw amino-acid sequence, 92 residues long: Large ribosomal subunit protein eL31 (92 aa).

Belongs to the eukaryotic ribosomal protein eL31 family.

The protein is Large ribosomal subunit protein eL31 of Pyrobaculum arsenaticum (strain DSM 13514 / JCM 11321 / PZ6).